The primary structure comprises 145 residues: Photosystem I reaction center subunit VI-1, chloroplastic (145 aa).

The transit peptide at 1–50 (MASLATVAAVKPSAAIKGLGGSSLAGAKLSIKPSRLSFKPKSIRANGVVA) directs the protein to the chloroplast. A helical transmembrane segment spans residues 102 to 118 (LLLKFLILGGGSLLTYV).

Belongs to the psaH family.

The protein localises to the plastid. Its subcellular location is the chloroplast thylakoid membrane. Functionally, possible role could be the docking of the LHC I antenna complex to the core complex. The protein is Photosystem I reaction center subunit VI-1, chloroplastic (PSAH1) of Arabidopsis thaliana (Mouse-ear cress).